A 28-amino-acid chain; its full sequence is Cytochrome b6-f complex subunit 6 (28 aa).

The helical transmembrane segment at 2-22 (VEYLVILSGMFGLALACFFGL) threads the bilayer.

It belongs to the PetL family. In terms of assembly, the 4 large subunits of the cytochrome b6-f complex are cytochrome b6, subunit IV (17 kDa polypeptide, PetD), cytochrome f and the Rieske protein, while the 4 small subunits are PetG, PetL, PetM and PetN. The complex functions as a dimer.

It localises to the plastid. It is found in the cyanelle thylakoid membrane. Its function is as follows. Component of the cytochrome b6-f complex, which mediates electron transfer between photosystem II (PSII) and photosystem I (PSI), cyclic electron flow around PSI, and state transitions. PetL is important for photoautotrophic growth as well as for electron transfer efficiency and stability of the cytochrome b6-f complex. This is Cytochrome b6-f complex subunit 6 from Cyanophora paradoxa.